The sequence spans 164 residues: Large ribosomal subunit protein uL10 (164 aa).

The protein belongs to the universal ribosomal protein uL10 family. As to quaternary structure, part of the ribosomal stalk of the 50S ribosomal subunit. The N-terminus interacts with L11 and the large rRNA to form the base of the stalk. The C-terminus forms an elongated spine to which L12 dimers bind in a sequential fashion forming a multimeric L10(L12)X complex.

Forms part of the ribosomal stalk, playing a central role in the interaction of the ribosome with GTP-bound translation factors. The chain is Large ribosomal subunit protein uL10 from Helicobacter pylori (strain HPAG1).